Here is a 233-residue protein sequence, read N- to C-terminus: Protein YIPF6 (233 aa).

The Cytoplasmic portion of the chain corresponds to 1–84 (MAETEGFGDS…PKKSTTLLRD (84 aa)). The helical transmembrane segment at 85-105 (WDLWGPLVLCVSLALMLQGGN) threads the bilayer. At 106-111 (ADSKDD) the chain is on the lumenal side. The helical transmembrane segment at 112-132 (GGPQFAEVFVIIWFGAVVITL) threads the bilayer. The Cytoplasmic portion of the chain corresponds to 133–142 (NSKLLGGTIS). A helical transmembrane segment spans residues 143-163 (FFQSLCVLGYCILPLTVAMLV). Residues 164-180 (CRLVLLLSHTTASFIVR) are Lumenal-facing. The helical transmembrane segment at 181-201 (LVVVTVMFAWSTFASTAFLAD) threads the bilayer. Residues 202-208 (SQPPNRR) lie on the Cytoplasmic side of the membrane. The chain crosses the membrane as a helical span at residues 209-229 (ALAVYPIFLFYFVISWMVLTF). The Lumenal portion of the chain corresponds to 230–233 (NTVS).

The protein belongs to the YIP1 family.

It is found in the golgi apparatus membrane. The sequence is that of Protein YIPF6 (yipf6) from Xenopus tropicalis (Western clawed frog).